The following is a 115-amino-acid chain: Holo-[acyl-carrier-protein] synthase (115 aa).

Residues aspartate 8 and glutamate 50 each coordinate Mg(2+).

Belongs to the P-Pant transferase superfamily. AcpS family. Mg(2+) is required as a cofactor.

The protein localises to the cytoplasm. It catalyses the reaction apo-[ACP] + CoA = holo-[ACP] + adenosine 3',5'-bisphosphate + H(+). Its function is as follows. Transfers the 4'-phosphopantetheine moiety from coenzyme A to a Ser of acyl-carrier-protein. This Pseudarthrobacter chlorophenolicus (strain ATCC 700700 / DSM 12829 / CIP 107037 / JCM 12360 / KCTC 9906 / NCIMB 13794 / A6) (Arthrobacter chlorophenolicus) protein is Holo-[acyl-carrier-protein] synthase.